Here is a 671-residue protein sequence, read N- to C-terminus: Talaropentaene synthase (671 aa).

Aspartate 92 lines the Mg(2+) pocket. Positions 92–96 match the DDXXD 1 motif; that stretch reads DDMTD. Positions 223-231 match the NSE/DTE motif; the sequence is NDLYSYEKE. 3 residues coordinate isopentenyl diphosphate: lysine 389, arginine 392, and histidine 421. Residues aspartate 428 and aspartate 432 each coordinate Mg(2+). Positions 428–432 match the DDXXD 2 motif; the sequence is DDIED. Arginine 437 contacts dimethylallyl diphosphate. Arginine 438 lines the isopentenyl diphosphate pocket. Residues lysine 515, threonine 516, glutamine 551, asparagine 558, lysine 568, and lysine 578 each contribute to the dimethylallyl diphosphate site.

In the N-terminal section; belongs to the terpene synthase family. This sequence in the C-terminal section; belongs to the FPP/GGPP synthase family. Mg(2+) is required as a cofactor.

The catalysed reaction is 5 isopentenyl diphosphate + dimethylallyl diphosphate = all-trans-hexaprenyl diphosphate + 5 diphosphate. It catalyses the reaction all-trans-hexaprenyl diphosphate = talaropentaene + diphosphate. Its function is as follows. Bifunctional terpene synthase that converts dimethylallyl diphosphate (DMAPP) and isopentenyl diphosphate (IPP) into talaropentaene as a single product. The C-terminal prenyltransferase (PT) domain of MpMS catalyzes formation of hexaprenyl diphosphate (HexPP), whereas the N-terminal terpene cyclase (TC) domain catalyzes the cyclization of HexPP to talaropentaene. This is Talaropentaene synthase from Talaromyces verruculosus (Penicillium verruculosum).